A 187-amino-acid polypeptide reads, in one-letter code: Small ribosomal subunit protein uS5 (187 aa).

Positions 1–20 are disordered; that stretch reads MAERENRRDRRDDRSREETP. The S5 DRBM domain occupies 22–85; that stretch reads FADRLVAINR…EQAKRQMIRV (64 aa). The tract at residues 154–174 is disordered; the sequence is DGLKRESSPRQVAQRRGKKVA.

This sequence belongs to the universal ribosomal protein uS5 family. As to quaternary structure, part of the 30S ribosomal subunit. Contacts proteins S4 and S8.

In terms of biological role, with S4 and S12 plays an important role in translational accuracy. Functionally, located at the back of the 30S subunit body where it stabilizes the conformation of the head with respect to the body. The chain is Small ribosomal subunit protein uS5 from Cereibacter sphaeroides (strain ATCC 17025 / ATH 2.4.3) (Rhodobacter sphaeroides).